The following is a 329-amino-acid chain: Endonuclease 8-like 2 (329 aa).

Pro-2 (schiff-base intermediate with DNA) is an active-site residue. Glu-3 functions as the Proton donor in the catalytic mechanism. Lys-50 acts as the Proton donor; for beta-elimination activity in catalysis. Lys-50 is subject to N6-acetyllysine. A Phosphoserine modification is found at Ser-68. Residues 88 to 112 (GPSAQEPSAGPSGSGEPVPSRSAET) are disordered. Position 150 is an N6-acetyllysine (Lys-150). Asn-227 contacts DNA. The FPG-type zinc finger occupies 280 to 316 (QIYQKEQCPSGHQVMKETFGPPDGLQRLTWWCPQCQP). The active-site Proton donor; for delta-elimination activity is the Arg-306.

This sequence belongs to the FPG family. In terms of assembly, binds EP300.

Its subcellular location is the nucleus. The catalysed reaction is 2'-deoxyribonucleotide-(2'-deoxyribose 5'-phosphate)-2'-deoxyribonucleotide-DNA = a 3'-end 2'-deoxyribonucleotide-(2,3-dehydro-2,3-deoxyribose 5'-phosphate)-DNA + a 5'-end 5'-phospho-2'-deoxyribonucleoside-DNA + H(+). With respect to regulation, acetylation of Lys-50 leads to loss of DNA nicking activity. Functionally, involved in base excision repair of DNA damaged by oxidation or by mutagenic agents. Has DNA glycosylase activity towards 5-hydroxyuracil and other oxidized derivatives of cytosine with a preference for mismatched double-stranded DNA (DNA bubbles). Has low or no DNA glycosylase activity towards thymine glycol, 2-hydroxyadenine, hypoxanthine and 8-oxoguanine. Has AP (apurinic/apyrimidinic) lyase activity and introduces nicks in the DNA strand. Cleaves the DNA backbone by beta-delta elimination to generate a single-strand break at the site of the removed base with both 3'- and 5'-phosphates. This Mus musculus (Mouse) protein is Endonuclease 8-like 2 (Neil2).